Reading from the N-terminus, the 377-residue chain is Peptide chain release factor 2 (377 aa).

Position 257 is an N5-methylglutamine (Gln257).

Belongs to the prokaryotic/mitochondrial release factor family. Methylated by PrmC. Methylation increases the termination efficiency of RF2.

It localises to the cytoplasm. Peptide chain release factor 2 directs the termination of translation in response to the peptide chain termination codons UGA and UAA. The polypeptide is Peptide chain release factor 2 (Lactiplantibacillus plantarum (strain ATCC BAA-793 / NCIMB 8826 / WCFS1) (Lactobacillus plantarum)).